The chain runs to 67 residues: Photosystem II reaction center protein H (67 aa).

Residues 27-47 (GAVPVMAFIGVLLLVFLVILL) form a helical membrane-spanning segment.

The protein belongs to the PsbH family. As to quaternary structure, PSII is composed of 1 copy each of membrane proteins PsbA, PsbB, PsbC, PsbD, PsbE, PsbF, PsbH, PsbI, PsbJ, PsbK, PsbL, PsbM, PsbT, PsbX, PsbY, Psb30/Ycf12, peripheral proteins PsbO, CyanoQ (PsbQ), PsbU, PsbV and a large number of cofactors. It forms dimeric complexes.

Its subcellular location is the cellular thylakoid membrane. One of the components of the core complex of photosystem II (PSII), required for its stability and/or assembly. PSII is a light-driven water:plastoquinone oxidoreductase that uses light energy to abstract electrons from H(2)O, generating O(2) and a proton gradient subsequently used for ATP formation. It consists of a core antenna complex that captures photons, and an electron transfer chain that converts photonic excitation into a charge separation. In Prochlorococcus marinus (strain MIT 9211), this protein is Photosystem II reaction center protein H.